Here is a 408-residue protein sequence, read N- to C-terminus: Succinylornithine transaminase (408 aa).

The residue at position 252 (lysine 252) is an N6-(pyridoxal phosphate)lysine.

It belongs to the class-III pyridoxal-phosphate-dependent aminotransferase family. AstC subfamily. Pyridoxal 5'-phosphate is required as a cofactor.

The catalysed reaction is N(2)-succinyl-L-ornithine + 2-oxoglutarate = N-succinyl-L-glutamate 5-semialdehyde + L-glutamate. It functions in the pathway amino-acid degradation; L-arginine degradation via AST pathway; L-glutamate and succinate from L-arginine: step 3/5. Its function is as follows. Catalyzes the transamination of N(2)-succinylornithine and alpha-ketoglutarate into N(2)-succinylglutamate semialdehyde and glutamate. Can also act as an acetylornithine aminotransferase. In Salmonella dublin (strain CT_02021853), this protein is Succinylornithine transaminase.